A 31-amino-acid polypeptide reads, in one-letter code: Cytochrome b6-f complex subunit 6 (31 aa).

A helical transmembrane segment spans residues 3 to 23; it reads ILINYFLLVGFCFALASGLFL.

This sequence belongs to the PetL family. In terms of assembly, the 4 large subunits of the cytochrome b6-f complex are cytochrome b6, subunit IV (17 kDa polypeptide, PetD), cytochrome f and the Rieske protein, while the 4 small subunits are PetG, PetL, PetM and PetN. The complex functions as a dimer.

It is found in the plastid. The protein resides in the chloroplast thylakoid membrane. Component of the cytochrome b6-f complex, which mediates electron transfer between photosystem II (PSII) and photosystem I (PSI), cyclic electron flow around PSI, and state transitions. PetL is important for photoautotrophic growth as well as for electron transfer efficiency and stability of the cytochrome b6-f complex. This Thalassiosira pseudonana (Marine diatom) protein is Cytochrome b6-f complex subunit 6.